Consider the following 305-residue polypeptide: NAD-dependent protein deacylase sirtuin-5, mitochondrial (305 aa).

Residues 1 to 32 (MIVRQLWCSRGSTSHLCAAVRLNWRSPKMTRP) constitute a mitochondrion transit peptide. One can recognise a Deacetylase sirtuin-type domain in the interval 33–303 (SSDLTAFREH…PPALERHESE (271 aa)). Position 54 to 73 (54 to 73 (GAGVSAESGVPTFRGPGGFW)) interacts with NAD(+). Residues Y98 and R101 each coordinate substrate. 136 to 139 (QNID) lines the NAD(+) pocket. H154 serves as the catalytic Proton acceptor. Residues C162, C165, C203, and C208 each contribute to the Zn(2+) site. Residues 245 to 247 (GTS), 271 to 273 (NME), and C289 each bind NAD(+).

Belongs to the sirtuin family. Class III subfamily. Zn(2+) is required as a cofactor.

The protein resides in the mitochondrion. The protein localises to the cytoplasm. It is found in the cytosol. It localises to the nucleus. It catalyses the reaction N(6)-malonyl-L-lysyl-[protein] + NAD(+) + H2O = 2''-O-malonyl-ADP-D-ribose + nicotinamide + L-lysyl-[protein]. It carries out the reaction N(6)-succinyl-L-lysyl-[protein] + NAD(+) + H2O = 2''-O-succinyl-ADP-D-ribose + nicotinamide + L-lysyl-[protein]. The enzyme catalyses N(6)-glutaryl-L-lysyl-[protein] + NAD(+) + H2O = 2''-O-glutaryl-ADP-D-ribose + nicotinamide + L-lysyl-[protein]. Functionally, NAD-dependent lysine demalonylase, desuccinylase and deglutarylase that specifically removes malonyl, succinyl and glutaryl groups on target proteins. Has weak NAD-dependent protein deacetylase activity; however this activity may not be physiologically relevant in vivo. The sequence is that of NAD-dependent protein deacylase sirtuin-5, mitochondrial (sirt5) from Danio rerio (Zebrafish).